We begin with the raw amino-acid sequence, 1070 residues long: DNA-directed RNA polymerase subunit beta (1070 aa).

Belongs to the RNA polymerase beta chain family. As to quaternary structure, in plastids the minimal PEP RNA polymerase catalytic core is composed of four subunits: alpha, beta, beta', and beta''. When a (nuclear-encoded) sigma factor is associated with the core the holoenzyme is formed, which can initiate transcription.

It is found in the plastid. The protein resides in the chloroplast. The catalysed reaction is RNA(n) + a ribonucleoside 5'-triphosphate = RNA(n+1) + diphosphate. In terms of biological role, DNA-dependent RNA polymerase catalyzes the transcription of DNA into RNA using the four ribonucleoside triphosphates as substrates. The sequence is that of DNA-directed RNA polymerase subunit beta from Buxus microphylla (Littleleaf boxwood).